Consider the following 472-residue polypeptide: 3-isopropylmalate dehydratase large subunit (472 aa).

[4Fe-4S] cluster contacts are provided by cysteine 353, cysteine 414, and cysteine 417.

It belongs to the aconitase/IPM isomerase family. LeuC type 1 subfamily. Heterodimer of LeuC and LeuD. [4Fe-4S] cluster serves as cofactor.

The enzyme catalyses (2R,3S)-3-isopropylmalate = (2S)-2-isopropylmalate. The protein operates within amino-acid biosynthesis; L-leucine biosynthesis; L-leucine from 3-methyl-2-oxobutanoate: step 2/4. In terms of biological role, catalyzes the isomerization between 2-isopropylmalate and 3-isopropylmalate, via the formation of 2-isopropylmaleate. The protein is 3-isopropylmalate dehydratase large subunit of Psychrobacter cryohalolentis (strain ATCC BAA-1226 / DSM 17306 / VKM B-2378 / K5).